The primary structure comprises 390 residues: Transposase for insertion sequence element IS256 in transposon Tn4001 (390 aa).

This sequence belongs to the transposase mutator family.

Required for the transposition of the insertion element. In Enterococcus faecalis (strain ATCC 700802 / V583), this protein is Transposase for insertion sequence element IS256 in transposon Tn4001.